Reading from the N-terminus, the 293-residue chain is Probable xyloglucan endotransglucosylase/hydrolase protein 5 (293 aa).

Positions Met1–Gly21 are cleaved as a signal peptide. Residues Pro23 to Tyr220 form the GH16 domain. Residue Glu106 is the Nucleophile of the active site. Catalysis depends on Glu110, which acts as the Proton donor. Xyloglucan is bound at residue Glu110. N-linked (GlcNAc...) asparagine glycosylation occurs at Asn114. Xyloglucan-binding positions include Gln123–Asn125, Asn133–Glu135, Asp199–Trp200, and Gly204. Intrachain disulfides connect Cys228–Cys237 and Cys274–Cys287. Arg279 is a binding site for xyloglucan.

This sequence belongs to the glycosyl hydrolase 16 family. XTH group 1 subfamily. Post-translationally, contains at least one intrachain disulfide bond essential for its enzymatic activity. Root specific.

Its subcellular location is the secreted. It is found in the cell wall. It localises to the extracellular space. The protein localises to the apoplast. It carries out the reaction breaks a beta-(1-&gt;4) bond in the backbone of a xyloglucan and transfers the xyloglucanyl segment on to O-4 of the non-reducing terminal glucose residue of an acceptor, which can be a xyloglucan or an oligosaccharide of xyloglucan.. Catalyzes xyloglucan endohydrolysis (XEH) and/or endotransglycosylation (XET). Cleaves and religates xyloglucan polymers, an essential constituent of the primary cell wall, and thereby participates in cell wall construction of growing tissues. In Arabidopsis thaliana (Mouse-ear cress), this protein is Probable xyloglucan endotransglucosylase/hydrolase protein 5 (XTH5).